The chain runs to 354 residues: Multiple sugar-binding periplasmic receptor ChvE (354 aa).

Positions 1-25 are cleaved as a signal peptide; sequence MKSIISLTAAAAIGVAMFVAPAFAA.

Belongs to the bacterial solute-binding protein 2 family.

It is found in the periplasm. Its function is as follows. Required for effective transcriptional induction of the vir genes by monosaccharides in response to plant signals and for normal growth and chemotaxis towards certain sugars. Functions as a periplasmic multiple sugar-binding receptor protein. It does not interact with a transport system. The sequence is that of Multiple sugar-binding periplasmic receptor ChvE (chvE) from Rhizobium radiobacter (Agrobacterium tumefaciens).